The following is a 274-amino-acid chain: Large ribosomal subunit protein uL2 (274 aa).

Residues 223-265 (VVMNPVDHPHGGGEGRTSGGRHPVSPWGMPTKGFKTRKNKRTD) form a disordered region. The segment covering 256–265 (FKTRKNKRTD) has biased composition (basic residues).

It belongs to the universal ribosomal protein uL2 family. Part of the 50S ribosomal subunit. Forms a bridge to the 30S subunit in the 70S ribosome.

In terms of biological role, one of the primary rRNA binding proteins. Required for association of the 30S and 50S subunits to form the 70S ribosome, for tRNA binding and peptide bond formation. It has been suggested to have peptidyltransferase activity; this is somewhat controversial. Makes several contacts with the 16S rRNA in the 70S ribosome. This is Large ribosomal subunit protein uL2 from Vibrio parahaemolyticus serotype O3:K6 (strain RIMD 2210633).